Consider the following 203-residue polypeptide: A-type ATP synthase subunit E (203 aa).

It belongs to the V-ATPase E subunit family. As to quaternary structure, has multiple subunits with at least A(3), B(3), C, D, E, F, H, I and proteolipid K(x).

The protein resides in the cell membrane. Its function is as follows. Component of the A-type ATP synthase that produces ATP from ADP in the presence of a proton gradient across the membrane. The polypeptide is A-type ATP synthase subunit E (Thermococcus kodakarensis (strain ATCC BAA-918 / JCM 12380 / KOD1) (Pyrococcus kodakaraensis (strain KOD1))).